A 317-amino-acid polypeptide reads, in one-letter code: uncharacterized protein (317 aa).

The Cytoplasmic portion of the chain corresponds to 1 to 13; sequence MKRVTGVFLTLLR. A helical membrane pass occupies residues 14-34; it reads FSQFASSVLVMSLLAYAIHAY. The Extracellular segment spans residues 35–49; the sequence is GNRGNKKTNFTLATG. N43 carries an N-linked (GlcNAc...) asparagine glycan. The helical transmembrane segment at 50–70 threads the bilayer; the sequence is VISVFYLIALGILCLALPTLI. Residue Y71 is a topological domain, cytoplasmic. The chain crosses the membrane as a helical span at residues 72–92; it reads IGMYFCAELIVCMLWLAAFVV. Topologically, residues 93–133 are extracellular; it reads LAKAQGERSCSNTNADGLYYNPYSGQYTADSHRRACNSSQA. Residue N129 is glycosylated (N-linked (GlcNAc...) asparagine). The helical transmembrane segment at 134–154 threads the bilayer; it reads AIAFSGLCFVLFLISVILLGI. Topologically, residues 155–317 are cytoplasmic; that stretch reads NVLTPIRKRY…EPNRNVNQMP (163 aa). The segment at 204–317 is disordered; sequence RTGDVEAGAG…EPNRNVNQMP (114 aa). Residues 239 to 250 show a composition bias toward low complexity; the sequence is TTTTNTRYTTTT. A compositionally biased stretch (polar residues) spans 256–282; the sequence is RYTTNDRNPGSANVANSAVDQHAYSTD. Residues 284–295 are compositionally biased toward basic and acidic residues; it reads SGDRSYQEKVTE. Residues 302 to 317 show a composition bias toward polar residues; that stretch reads MSGSTAEPNRNVNQMP.

It localises to the membrane. This is an uncharacterized protein from Saccharomyces cerevisiae (strain ATCC 204508 / S288c) (Baker's yeast).